A 44-amino-acid chain; its full sequence is Unknown protein 9 (44 aa).

The polypeptide is Unknown protein 9 (Pseudotsuga menziesii (Douglas-fir)).